The sequence spans 83 residues: Mu-theraphotoxin-Hhn2c (83 aa).

The N-terminal stretch at 1–21 (MKASMFLALAGLVLLFVVGYA) is a signal peptide. Residues 22-48 (SESEEKEFPIELLSKIFAVDVFKGEER) constitute a propeptide that is removed on maturation. Intrachain disulfides connect Cys50–Cys65, Cys57–Cys70, and Cys64–Cys77. Residue Leu81 is modified to Leucine amide.

The protein belongs to the neurotoxin 10 (Hwtx-1) family. 15 (Hntx-3) subfamily. Monomer. As to expression, expressed by the venom gland.

The protein resides in the secreted. Functionally, lethal neurotoxin. Selectively blocks tetrodotoxin-sensitive voltage-gated sodium channels (Nav). Does not affect tetrodotoxin-resistant voltage-gated sodium channels or calcium channels. The polypeptide is Mu-theraphotoxin-Hhn2c (Cyriopagopus hainanus (Chinese bird spider)).